The sequence spans 302 residues: Ubiquinone biosynthesis protein COQ4, mitochondrial (302 aa).

A mitochondrion-targeting transit peptide spans 1–19 (MNSSPARAVRALVQSQSRQ). Zn(2+)-binding residues include H176, D177, H180, and E192. A compositionally biased stretch (basic and acidic residues) spans 268-282 (PPPDMRDARKRERDA). Positions 268 to 302 (PPPDMRDARKRERDARRRRKQLETEAQQGLDAASL) are disordered.

It belongs to the COQ4 family. Component of a multi-subunit COQ enzyme complex, composed of at least COQ3, COQ4, COQ5, COQ6, COQ7 and COQ9. Zn(2+) serves as cofactor.

It is found in the mitochondrion inner membrane. It carries out the reaction a 4-hydroxy-3-methoxy-5-(all-trans-polyprenyl)benzoate + H(+) = a 2-methoxy-6-(all-trans-polyprenyl)phenol + CO2. Its pathway is cofactor biosynthesis; ubiquinone biosynthesis. Functionally, lyase that catalyzes the C1-decarboxylation of 4-hydroxy-3-methoxy-5-(all-trans-polyprenyl)benzoic acid into 2-methoxy-6-(all-trans-polyprenyl)phenol during ubiquinone biosynthesis. The chain is Ubiquinone biosynthesis protein COQ4, mitochondrial from Pyricularia oryzae (strain 70-15 / ATCC MYA-4617 / FGSC 8958) (Rice blast fungus).